A 76-amino-acid polypeptide reads, in one-letter code: MKLTILFLVAAVLMSTQALIQHDGEKSQKAKMKFLTARTLSAKKRDVDCVGWSSYCGPWNNPPCCSWYTCDYYCKL.

Residues 1-18 (MKLTILFLVAAVLMSTQA) form the signal peptide. A propeptide spanning residues 19-42 (LIQHDGEKSQKAKMKFLTARTLSA) is cleaved from the precursor. 3 cysteine pairs are disulfide-bonded: cysteine 49–cysteine 65, cysteine 56–cysteine 70, and cysteine 64–cysteine 74.

The protein belongs to the conotoxin O2 superfamily. As to expression, expressed by the venom duct.

Its subcellular location is the secreted. In Conus ventricosus (Mediterranean cone), this protein is Conotoxin VnMEKL-012.